A 316-amino-acid chain; its full sequence is Protoheme IX farnesyltransferase (316 aa).

Transmembrane regions (helical) follow at residues 32 to 52 (VMSL…GHIH), 53 to 73 (PVLG…SGAL), 93 to 113 (IPAG…LSGF), 116 to 136 (VILG…TIFF), 152 to 172 (NIVI…ACVT), 180 to 200 (TVLF…LALF), 221 to 241 (VTKH…ILPS), 252 to 271 (LVAA…VWRM), and 289 to 309 (IFYL…SIFV).

Belongs to the UbiA prenyltransferase family. Protoheme IX farnesyltransferase subfamily.

It localises to the cell inner membrane. It catalyses the reaction heme b + (2E,6E)-farnesyl diphosphate + H2O = Fe(II)-heme o + diphosphate. Its pathway is porphyrin-containing compound metabolism; heme O biosynthesis; heme O from protoheme: step 1/1. Converts heme B (protoheme IX) to heme O by substitution of the vinyl group on carbon 2 of heme B porphyrin ring with a hydroxyethyl farnesyl side group. This is Protoheme IX farnesyltransferase from Rhizobium leguminosarum bv. trifolii (strain WSM2304).